The following is a 319-amino-acid chain: MRTIAVLTSGGDAPGMNAAIRAVVRTGLEKGLKVMGIQRGYNGLINGEIFEMDTHSVSDIIQRGGTILRTARCEEFRTEQGREKAAKILKAFGIDGLVVIGGDGSFHGAQLLSKLGINTVGLPGTIDNDLAYTDYTIGFDTSINTVLDAINKLRDTSTSHERVSVVEVMGRNCGDIALYTGVAGGAESIIIPEKEYNADKLCKQILQGKLKGKMHNLVLLAEGVGGANELAKYIEEVTGIETRSTILGHIQRGGSPTCMDRILASRMAYKAVELLISGKSSRVVGIKNGEIIDMDIDEALAVERSFDQELYDIATILSK.

G11 provides a ligand contact to ATP. An ADP-binding site is contributed by 21-25 (RAVVR). ATP-binding positions include 72 to 73 (RC) and 102 to 105 (GDGS). Mg(2+) is bound at residue D103. 125–127 (TID) serves as a coordination point for substrate. The active-site Proton acceptor is the D127. R154 contacts ADP. Substrate is bound by residues R162 and 169 to 171 (MGR). Residues 185 to 187 (GAE), K211, and 213 to 215 (KMH) each bind ADP. Residues E222, R243, and 249 to 252 (HIQR) each bind substrate.

This sequence belongs to the phosphofructokinase type A (PFKA) family. ATP-dependent PFK group I subfamily. Prokaryotic clade 'B1' sub-subfamily. In terms of assembly, homotetramer. Mg(2+) is required as a cofactor.

Its subcellular location is the cytoplasm. It carries out the reaction beta-D-fructose 6-phosphate + ATP = beta-D-fructose 1,6-bisphosphate + ADP + H(+). The protein operates within carbohydrate degradation; glycolysis; D-glyceraldehyde 3-phosphate and glycerone phosphate from D-glucose: step 3/4. With respect to regulation, allosterically activated by ADP and other diphosphonucleosides, and allosterically inhibited by phosphoenolpyruvate. In terms of biological role, catalyzes the phosphorylation of D-fructose 6-phosphate to fructose 1,6-bisphosphate by ATP, the first committing step of glycolysis. This chain is ATP-dependent 6-phosphofructokinase, found in Clostridium botulinum (strain 657 / Type Ba4).